A 163-amino-acid polypeptide reads, in one-letter code: Epithelial membrane protein 3 (163 aa).

The chain crosses the membrane as a helical span at residues 4 to 24 (LLLVVSALHILILILLFVATL). N-linked (GlcNAc...) asparagine glycans are attached at residues asparagine 49 and asparagine 56. 3 consecutive transmembrane segments (helical) span residues 66-86 (VQVL…LFMF), 100-120 (TGFC…IYAI), and 139-159 (FALA…YIHL).

Belongs to the PMP-22/EMP/MP20 family.

The protein localises to the membrane. Functionally, probably involved in cell proliferation and cell-cell interactions. This Bos taurus (Bovine) protein is Epithelial membrane protein 3 (EMP3).